The sequence spans 444 residues: Glycogen synthase (444 aa).

Arginine 15 lines the ADP-alpha-D-glucose pocket.

This sequence belongs to the glycosyltransferase 1 family. Bacterial/plant glycogen synthase subfamily.

It catalyses the reaction [(1-&gt;4)-alpha-D-glucosyl](n) + ADP-alpha-D-glucose = [(1-&gt;4)-alpha-D-glucosyl](n+1) + ADP + H(+). It functions in the pathway glycan biosynthesis; glycogen biosynthesis. In terms of biological role, synthesizes alpha-1,4-glucan chains using ADP-glucose. The protein is Glycogen synthase of Deinococcus radiodurans (strain ATCC 13939 / DSM 20539 / JCM 16871 / CCUG 27074 / LMG 4051 / NBRC 15346 / NCIMB 9279 / VKM B-1422 / R1).